The primary structure comprises 445 residues: Amino-acid acetyltransferase (445 aa).

An N-acetyltransferase domain is found at 299 to 438 (EQVRQAQIDD…QGLYNYQRNS (140 aa)).

This sequence belongs to the acetyltransferase family. ArgA subfamily.

It localises to the cytoplasm. The enzyme catalyses L-glutamate + acetyl-CoA = N-acetyl-L-glutamate + CoA + H(+). It functions in the pathway amino-acid biosynthesis; L-arginine biosynthesis; N(2)-acetyl-L-ornithine from L-glutamate: step 1/4. This Vibrio atlanticus (strain LGP32) (Vibrio splendidus (strain Mel32)) protein is Amino-acid acetyltransferase.